We begin with the raw amino-acid sequence, 660 residues long: ATPase WRNIP1 (660 aa).

A UBZ4-type zinc finger spans residues 17–44; sequence QVQCPVCQQMMPAAHINSHLDRCLLLHP. 5 residues coordinate Zn(2+): Cys20, Cys23, His31, His35, and Cys39. The interval 50–191 is disordered; that stretch reads PAAGPHRAGE…DDPGHWDADA (142 aa). Phosphoserine is present on residues Ser65 and Ser75. Residues 76-89 are compositionally biased toward polar residues; the sequence is ESSALKQPATPTAA. A Glycyl lysine isopeptide (Lys-Gly) (interchain with G-Cter in ubiquitin) cross-link involves residue Lys81. A Phosphothreonine modification is found at Thr85. Ser91 and Ser92 each carry phosphoserine. The segment covering 92–104 has biased composition (acidic residues); sequence SEGEGEEGDDGGE. A Phosphothreonine modification is found at Thr116. Residues 135-155 show a composition bias toward low complexity; the sequence is ARKGLGKRPAAAAAAGSASPR. Lys141 is covalently cross-linked (Glycyl lysine isopeptide (Lys-Gly) (interchain with G-Cter in ubiquitin)). Ser153 bears the Phosphoserine mark. Residues 159 to 182 show a composition bias toward acidic residues; the sequence is ETEAQEEEEAGVDGDGDADVDGED. Lys220 is covalently cross-linked (Glycyl lysine isopeptide (Lys-Gly) (interchain with G-Cter in ubiquitin)). Position 265 to 271 (265 to 271) interacts with ATP; that stretch reads PGCGKTT. Glycyl lysine isopeptide (Lys-Gly) (interchain with G-Cter in ubiquitin) cross-links involve residues Lys296, Lys305, Lys311, Lys317, and Lys330. Lys477 is covalently cross-linked (Glycyl lysine isopeptide (Lys-Gly) (interchain with G-Cter in SUMO2); alternate). A Glycyl lysine isopeptide (Lys-Gly) (interchain with G-Cter in ubiquitin); alternate cross-link involves residue Lys477. Phosphotyrosine occurs at positions 529 and 557. Residue Lys622 forms a Glycyl lysine isopeptide (Lys-Gly) (interchain with G-Cter in ubiquitin) linkage. Residue Lys628 forms a Glycyl lysine isopeptide (Lys-Gly) (interchain with G-Cter in ubiquitin); alternate linkage. Residue Lys628 is modified to N6-acetyllysine; alternate. Lys631 participates in a covalent cross-link: Glycyl lysine isopeptide (Lys-Gly) (interchain with G-Cter in ubiquitin).

The protein belongs to the AAA ATPase family. RarA/MGS1/WRNIP1 subfamily. Forms homooligomers, possibly octamers. Directly interacts with POLD1, POLD2 and POLD4. Interacts with the N-terminal domain of WRN. Interacts (via UBZ4-type zinc finger) with monoubiquitin and polyubiquitin. Interacts with TRIM14 and PPP6C; these interactions positively regulate the RIGI signaling pathway. In terms of processing, sumoylated with SUMO1 and SUMO2/3. As to expression, ubiquitously expressed.

Its subcellular location is the nucleus. It is found in the cytoplasm. The enzyme catalyses ATP + H2O = ADP + phosphate + H(+). In terms of biological role, functions as a modulator of initiation or reinitiation events during DNA polymerase delta-mediated DNA synthesis. In the presence of ATP, stimulation of DNA polymerase delta-mediated DNA synthesis is decreased. Also plays a role in the innate immune defense against viruses. Stabilizes the RIGI dsRNA interaction and promotes RIGI 'Lys-63'-linked polyubiquitination. In turn, RIGI transmits the signal through mitochondrial MAVS. This chain is ATPase WRNIP1, found in Rattus norvegicus (Rat).